Here is a 132-residue protein sequence, read N- to C-terminus: L-ectoine synthase (132 aa).

The protein belongs to the ectoine synthase family.

It catalyses the reaction (2S)-4-acetamido-2-aminobutanoate = L-ectoine + H2O. It functions in the pathway amine and polyamine biosynthesis; ectoine biosynthesis; L-ectoine from L-aspartate 4-semialdehyde: step 3/3. Catalyzes the circularization of gamma-N-acetyl-alpha,gamma-diaminobutyric acid (ADABA) to ectoine (1,4,5,6-tetrahydro-2-methyl-4-pyrimidine carboxylic acid), which is an excellent osmoprotectant. This Teredinibacter turnerae (strain ATCC 39867 / T7901) protein is L-ectoine synthase.